A 374-amino-acid polypeptide reads, in one-letter code: Probable dual-specificity RNA methyltransferase RlmN 3 (374 aa).

Glu-96 (proton acceptor) is an active-site residue. A Radical SAM core domain is found at 110 to 350 (DHSRKTICIS…VTLRREKGHD (241 aa)). Cysteines 117 and 355 form a disulfide. Residues Cys-124, Cys-128, and Cys-131 each coordinate [4Fe-4S] cluster. S-adenosyl-L-methionine contacts are provided by residues 181 to 182 (GE), Ser-213, 236 to 238 (SLH), and Asn-312. The active-site S-methylcysteine intermediate is Cys-355.

This sequence belongs to the radical SAM superfamily. RlmN family. [4Fe-4S] cluster is required as a cofactor.

The protein localises to the cytoplasm. It catalyses the reaction adenosine(2503) in 23S rRNA + 2 reduced [2Fe-2S]-[ferredoxin] + 2 S-adenosyl-L-methionine = 2-methyladenosine(2503) in 23S rRNA + 5'-deoxyadenosine + L-methionine + 2 oxidized [2Fe-2S]-[ferredoxin] + S-adenosyl-L-homocysteine. It carries out the reaction adenosine(37) in tRNA + 2 reduced [2Fe-2S]-[ferredoxin] + 2 S-adenosyl-L-methionine = 2-methyladenosine(37) in tRNA + 5'-deoxyadenosine + L-methionine + 2 oxidized [2Fe-2S]-[ferredoxin] + S-adenosyl-L-homocysteine. In terms of biological role, specifically methylates position 2 of adenine 2503 in 23S rRNA and position 2 of adenine 37 in tRNAs. The polypeptide is Probable dual-specificity RNA methyltransferase RlmN 3 (Opitutus terrae (strain DSM 11246 / JCM 15787 / PB90-1)).